Reading from the N-terminus, the 525-residue chain is G-protein regulator 1 (525 aa).

The 22-residue stretch at 424–445 (PVDMMDLIFSMSSRMDDQRTEL) folds into the GoLoco domain. The interval 488-525 (HTMNRILKRSKKSKSSLDSTNSMQGDDTRSDDVTMTSK) is disordered.

Interacts with gpr-1, lin-5 and GDP-bound goa-1.

The protein resides in the cytoplasm. The protein localises to the cell cortex. Its subcellular location is the cytoskeleton. It is found in the spindle. Its function is as follows. In the 1-cell embryo, probably together with gpr-2, controls nuclear rotation and spindle elongation during mitosis. Complex of gpr-1 and gpr-2, in association with lin-5, activates G-protein signaling to affect mitotic spindle force. Polarity determinants (par genes) may regulate lin-5/gpr-1/gpr-2/goa-1 locally to create the asymmetric forces that drive spindle movement. The sequence is that of G-protein regulator 1 (gpr-1) from Caenorhabditis elegans.